We begin with the raw amino-acid sequence, 1011 residues long: Antigenic heat-stable 120 kDa protein (1011 aa).

Disordered stretches follow at residues 1–37 (DTSEFDPLANKEYTEEQKQTEEQEQKEFLSQTTTPAL), 54–73 (TPSMSALSGNISPDSQTSDP), and 348–396 (GQSK…PQSQ). Residues 12-27 (EYTEEQKQTEEQEQKE) show a composition bias toward basic and acidic residues. 2 stretches are compositionally biased toward polar residues: residues 348-373 (GQSKEQPLITPQQTTSSSVEPPQYKQ) and 380-396 (PTNQPLQPETSQMPQSQ).

It localises to the cytoplasm. The sequence is that of Antigenic heat-stable 120 kDa protein (sca4) from Rickettsia sibirica subsp. mongolitimonae (Rickettsia mongolotimonae).